The chain runs to 882 residues: MQDLDPVETQEWLDALESVLDREGEDRAHYLMTRMGELASRSGTQLPYAITTPYRNTIPVTHEARMPGDLFMERRIRSLVRWNALAMVMRANKHDPDLGGHISTFASSATLYDIGFNYFFQAPTDEHGGDLVFFQGHASPGVYARAFLEGRISEEQLENFRQEVDGNGLSSYPHPWLMPDFWQFPTVSMGLGPIQAIYQARFMKYLESRGFIPAGKQKVWCFMGDGECDEPESLGAISLAGREKLDNLIFVINCNLQRLDGPVRGNAKIIQELEGVFRGAEWNVNKVIWGRFWDPLFAKDTAGLLQQRMDEVIDGEYQNYKAKDGAYVREHFFGARPELLEMVKDLSDEEIWKLNRGGHDPYKVYAAYHQAVNHKGQPTVILAKTIKGYGTGSGEAKNIAHNVKKVDVDSLRAFRDKFDIPVKDADLEKLPFYKPEEGSAEAKYLAERRAALGGFMPVRRQKSMSVPVPPLETLKAMLDGSGDREISTTMAFVRIISQLVKDKELGPRIVPIVPDEARTFGMEGMFRQLGIYSSVGQLYEPVDKDQVMFYREDKKGQILEEGINEAGAMSSWIAAGTSYSTHNQPMLPFYIFYSMFGFQRIGDLAWAAGDSRAHGFLIGGTAGRTTLNGEGLQHEDGHSHLLASTIPNCRTYDPTYAYELAVIIREGSRQMIEEQQDIFYYITVMNENYVQPAMPKGAEEGIIKGMYLLEEDKKEAAHHVQLLGSGTILREVEEAAKLLRNDFGIGADVWSVPSFNELRRDGLAVERWNRLHPGQKPKQSYVEECLGGRRGPVIASTDYMKLYAEQIRQWVPSKEYKVLGTDGFGRSDSRKKLRNFFEVDRHWVVLAALEALADRGDIEPKVVAEAIAKYGIDPEKRNPLDC.

In terms of assembly, homodimer. Part of the PDH complex, consisting of multiple copies of pyruvate dehydrogenase (E1), dihydrolipoamide acetyltransferase (E2) and lipoamide dehydrogenase (E3). It depends on thiamine diphosphate as a cofactor.

It carries out the reaction N(6)-[(R)-lipoyl]-L-lysyl-[protein] + pyruvate + H(+) = N(6)-[(R)-S(8)-acetyldihydrolipoyl]-L-lysyl-[protein] + CO2. Functionally, component of the pyruvate dehydrogenase (PDH) complex, that catalyzes the overall conversion of pyruvate to acetyl-CoA and CO(2). This Pseudomonas aeruginosa (strain ATCC 15692 / DSM 22644 / CIP 104116 / JCM 14847 / LMG 12228 / 1C / PRS 101 / PAO1) protein is Pyruvate dehydrogenase E1 component (aceE).